Reading from the N-terminus, the 453-residue chain is tRNA modification GTPase MnmE (453 aa).

Residues Arg-22, Glu-79, and Lys-119 each coordinate (6S)-5-formyl-5,6,7,8-tetrahydrofolate. The TrmE-type G domain occupies 215–376 (GMKVVIAGRP…LKQHLKSLMG (162 aa)). Asn-225 is a K(+) binding site. GTP is bound by residues 225–230 (NAGKSS), 244–250 (TEIAGTT), 269–272 (DTAG), and 334–337 (NKAD). Residue Ser-229 participates in Mg(2+) binding. Residues Thr-244, Ile-246, and Thr-249 each contribute to the K(+) site. A Mg(2+)-binding site is contributed by Thr-250. Lys-453 is a (6S)-5-formyl-5,6,7,8-tetrahydrofolate binding site.

Belongs to the TRAFAC class TrmE-Era-EngA-EngB-Septin-like GTPase superfamily. TrmE GTPase family. In terms of assembly, homodimer. Heterotetramer of two MnmE and two MnmG subunits. It depends on K(+) as a cofactor.

The protein resides in the cytoplasm. Exhibits a very high intrinsic GTPase hydrolysis rate. Involved in the addition of a carboxymethylaminomethyl (cmnm) group at the wobble position (U34) of certain tRNAs, forming tRNA-cmnm(5)s(2)U34. This Shewanella baltica (strain OS155 / ATCC BAA-1091) protein is tRNA modification GTPase MnmE.